The chain runs to 1012 residues: DNA polymerase catalytic subunit (1012 aa).

This sequence belongs to the DNA polymerase type-B family.

It localises to the host nucleus. The enzyme catalyses DNA(n) + a 2'-deoxyribonucleoside 5'-triphosphate = DNA(n+1) + diphosphate. The sequence is that of DNA polymerase catalytic subunit (U38) from Human herpesvirus 6A (strain Uganda-1102) (HHV-6 variant A).